The chain runs to 717 residues: Epithelial splicing regulatory protein 2 (717 aa).

Residues Met1–Asp14 are compositionally biased toward pro residues. The segment at Met1–Pro23 is disordered. Phosphoserine is present on Ser83. 3 consecutive RRM domains span residues Thr247–Ser343, Val348–Ala428, and Asp465–Thr545. Phosphoserine is present on Ser563.

It belongs to the ESRP family. Interacts with RBPMS. In terms of tissue distribution, epithelial cell-specific.

Its subcellular location is the nucleus. Its function is as follows. mRNA splicing factor that regulates the formation of epithelial cell-specific isoforms. Specifically regulates the expression of FGFR2-IIIb, an epithelial cell-specific isoform of FGFR2. Also regulates the splicing of CD44, CTNND1, ENAH, 3 transcripts that undergo changes in splicing during the epithelial-to-mesenchymal transition (EMT). Acts by directly binding specific sequences in mRNAs. Binds the GU-rich sequence motifs in the ISE/ISS-3, a cis-element regulatory region present in the mRNA of FGFR2. This chain is Epithelial splicing regulatory protein 2 (Esrp2), found in Mus musculus (Mouse).